The primary structure comprises 376 residues: Glucose-1-phosphate adenylyltransferase (376 aa).

Alpha-D-glucose 1-phosphate is bound by residues Tyr-101, Gly-166, 181-182, and Ser-192; that span reads EK.

It belongs to the bacterial/plant glucose-1-phosphate adenylyltransferase family. In terms of assembly, homotetramer.

It catalyses the reaction alpha-D-glucose 1-phosphate + ATP + H(+) = ADP-alpha-D-glucose + diphosphate. It participates in glycan biosynthesis; glycogen biosynthesis. Functionally, involved in the biosynthesis of ADP-glucose, a building block required for the elongation reactions to produce glycogen. Catalyzes the reaction between ATP and alpha-D-glucose 1-phosphate (G1P) to produce pyrophosphate and ADP-Glc. The chain is Glucose-1-phosphate adenylyltransferase from Bacillus cereus (strain ATCC 10987 / NRS 248).